The chain runs to 125 residues: UPF0332 protein AF_0298 (125 aa).

Belongs to the UPF0332 family.

In Archaeoglobus fulgidus (strain ATCC 49558 / DSM 4304 / JCM 9628 / NBRC 100126 / VC-16), this protein is UPF0332 protein AF_0298.